The primary structure comprises 176 residues: Orotate phosphoribosyltransferase (176 aa).

5-phospho-alpha-D-ribose 1-diphosphate contacts are provided by residues Arg-90, Lys-91, Lys-94, and 116-124 (EDVTTTGGS). Residues Thr-120 and Arg-148 each coordinate orotate.

This sequence belongs to the purine/pyrimidine phosphoribosyltransferase family. PyrE subfamily. As to quaternary structure, homodimer. It depends on Mg(2+) as a cofactor.

It catalyses the reaction orotidine 5'-phosphate + diphosphate = orotate + 5-phospho-alpha-D-ribose 1-diphosphate. It participates in pyrimidine metabolism; UMP biosynthesis via de novo pathway; UMP from orotate: step 1/2. In terms of biological role, catalyzes the transfer of a ribosyl phosphate group from 5-phosphoribose 1-diphosphate to orotate, leading to the formation of orotidine monophosphate (OMP). This is Orotate phosphoribosyltransferase from Methanocaldococcus jannaschii (strain ATCC 43067 / DSM 2661 / JAL-1 / JCM 10045 / NBRC 100440) (Methanococcus jannaschii).